The following is a 275-amino-acid chain: Putative phosphoenolpyruvate synthase regulatory protein (275 aa).

153–160 (GVSRSGKT) lines the ADP pocket.

It belongs to the pyruvate, phosphate/water dikinase regulatory protein family. PSRP subfamily.

The enzyme catalyses [pyruvate, water dikinase] + ADP = [pyruvate, water dikinase]-phosphate + AMP + H(+). The catalysed reaction is [pyruvate, water dikinase]-phosphate + phosphate + H(+) = [pyruvate, water dikinase] + diphosphate. Bifunctional serine/threonine kinase and phosphorylase involved in the regulation of the phosphoenolpyruvate synthase (PEPS) by catalyzing its phosphorylation/dephosphorylation. This Nitrosomonas eutropha (strain DSM 101675 / C91 / Nm57) protein is Putative phosphoenolpyruvate synthase regulatory protein.